Here is a 186-residue protein sequence, read N- to C-terminus: TATA-box-binding protein D (186 aa).

2 consecutive repeat copies span residues 10–86 and 101–179.

This sequence belongs to the TBP family.

In terms of biological role, general factor that plays a role in the activation of archaeal genes transcribed by RNA polymerase. Binds specifically to the TATA box promoter element which lies close to the position of transcription initiation. This Halobacterium salinarum (strain ATCC 700922 / JCM 11081 / NRC-1) (Halobacterium halobium) protein is TATA-box-binding protein D (tbpD).